Reading from the N-terminus, the 68-residue chain is DNA-directed RNA polymerase subunit omega (68 aa).

The protein belongs to the RNA polymerase subunit omega family. The RNAP catalytic core consists of 2 alpha, 1 beta, 1 beta' and 1 omega subunit. When a sigma factor is associated with the core the holoenzyme is formed, which can initiate transcription.

The catalysed reaction is RNA(n) + a ribonucleoside 5'-triphosphate = RNA(n+1) + diphosphate. Its function is as follows. Promotes RNA polymerase assembly. Latches the N- and C-terminal regions of the beta' subunit thereby facilitating its interaction with the beta and alpha subunits. This is DNA-directed RNA polymerase subunit omega from Geobacter sp. (strain M21).